A 167-amino-acid polypeptide reads, in one-letter code: Ubiquitin-fold modifier-conjugating enzyme 1 (167 aa).

C116 functions as the Glycyl thioester intermediate in the catalytic mechanism. A Glycyl lysine isopeptide (Lys-Gly) (interchain with G-Cter in UFM1) cross-link involves residue K122.

This sequence belongs to the ubiquitin-conjugating enzyme family. UFC1 subfamily. As to quaternary structure, interacts with UBA5 (via C-terminus). Interacts with UFL1. Interacts with UFM1. Interacts with KIRREL3. Post-translationally, ufmylated at Lys-122. Deufmylated by UFSP1.

In terms of biological role, E2-like enzyme which specifically catalyzes the second step in ufmylation. Accepts the ubiquitin-like modifier UFM1 from the E1 enzyme UBA5 and forms an intermediate with UFM1 via a thioester linkage. Ufmylation is involved in various processes, such as ribosome recycling, response to DNA damage, interferon response or reticulophagy (also called ER-phagy). The sequence is that of Ubiquitin-fold modifier-conjugating enzyme 1 from Homo sapiens (Human).